Here is a 100-residue protein sequence, read N- to C-terminus: C-X-C motif chemokine 3 (100 aa).

A signal peptide spans 1 to 31 (MAPPTCRLLSAALVLLLLLATNHQATGAVVA). 2 cysteine pairs are disulfide-bonded: cysteine 36–cysteine 62 and cysteine 38–cysteine 78.

Belongs to the intercrine alpha (chemokine CxC) family.

It localises to the secreted. Its function is as follows. Ligand for CXCR2. Has chemotactic activity for neutrophils. May play a role in inflammation and exert its effects on endothelial cells in an autocrine fashion. This chain is C-X-C motif chemokine 3, found in Mus musculus (Mouse).